Reading from the N-terminus, the 428-residue chain is Bifunctional protein GlmU (428 aa).

The tract at residues 1–221 (MDIVILAAGC…ERKAMGINTR (221 aa)) is pyrophosphorylase. Residues 6-9 (LAAG), lysine 20, glutamine 74, 79-80 (GT), 103-105 (YGD), glycine 140, and asparagine 219 contribute to the UDP-N-acetyl-alpha-D-glucosamine site. Aspartate 105 serves as a coordination point for Mg(2+). Asparagine 219 contributes to the Mg(2+) binding site. Residues 222–242 (ADLAIAESYFQCMKRASFLQS) are linker. An N-acetyltransferase region spans residues 243–428 (GVTLTSPDQV…TTKPEYKTRR (186 aa)). 2 residues coordinate UDP-N-acetyl-alpha-D-glucosamine: arginine 308 and lysine 326. Catalysis depends on histidine 338, which acts as the Proton acceptor. Residues tyrosine 341 and asparagine 352 each contribute to the UDP-N-acetyl-alpha-D-glucosamine site. Acetyl-CoA contacts are provided by residues alanine 355, 361 to 362 (NY), alanine 398, and arginine 415.

It in the N-terminal section; belongs to the N-acetylglucosamine-1-phosphate uridyltransferase family. The protein in the C-terminal section; belongs to the transferase hexapeptide repeat family. As to quaternary structure, homotrimer. Mg(2+) serves as cofactor.

The protein localises to the cytoplasm. It carries out the reaction alpha-D-glucosamine 1-phosphate + acetyl-CoA = N-acetyl-alpha-D-glucosamine 1-phosphate + CoA + H(+). The enzyme catalyses N-acetyl-alpha-D-glucosamine 1-phosphate + UTP + H(+) = UDP-N-acetyl-alpha-D-glucosamine + diphosphate. Its pathway is nucleotide-sugar biosynthesis; UDP-N-acetyl-alpha-D-glucosamine biosynthesis; N-acetyl-alpha-D-glucosamine 1-phosphate from alpha-D-glucosamine 6-phosphate (route II): step 2/2. It functions in the pathway nucleotide-sugar biosynthesis; UDP-N-acetyl-alpha-D-glucosamine biosynthesis; UDP-N-acetyl-alpha-D-glucosamine from N-acetyl-alpha-D-glucosamine 1-phosphate: step 1/1. It participates in bacterial outer membrane biogenesis; LPS lipid A biosynthesis. Functionally, catalyzes the last two sequential reactions in the de novo biosynthetic pathway for UDP-N-acetylglucosamine (UDP-GlcNAc). The C-terminal domain catalyzes the transfer of acetyl group from acetyl coenzyme A to glucosamine-1-phosphate (GlcN-1-P) to produce N-acetylglucosamine-1-phosphate (GlcNAc-1-P), which is converted into UDP-GlcNAc by the transfer of uridine 5-monophosphate (from uridine 5-triphosphate), a reaction catalyzed by the N-terminal domain. This is Bifunctional protein GlmU from Anaplasma marginale (strain Florida).